A 545-amino-acid polypeptide reads, in one-letter code: MLTQLKTYPKLLKHYEEIKEVHMHDWFSKDKERASRYFVQFESLSLDYSKNRLNDTTLKLLFELADDCSLKEKIEAMFKGEKINTTEKRAVLHTALRSLNDAEILLDNMEVLKSVRSVLKRMRAFSDSVRSGKRLGYTNQVITDIVNIGIGGSDLGALMVCTALKRYGHPRLKMHFVSNVDGTQILDVLEKINPASTLFIVASKTFSTQETLTNALTARKWFVERSGDEKHIAKHFVAVSTNKEAVQQFGIDEHNMFEFWDFVGGRYSLWSAIGLSIMIYLGKKNFNALLKGAYLMDEHFRNAPFESNLPVLMGLIGVWYINFFQSKSHLIAPYDQYLRHFPKFIQQLDMESNGKRISKKGETIPYDTCPVVWGDMGINAQHAFFQLLHQGTHLIPIDFIASLDKKPNAKGHHEILFSNVLAQAQAFMKGKSYEEALGELLFKGLDKDEAKDLAHHRVFFGNRPSNILLLEKISPSNIGALVALYEHKVFVQGVIWDINSFDQWGVELGKELAVPILQELEGHKSNAYFDSSTKHLIELYKNYNQ.

Glu351 functions as the Proton donor in the catalytic mechanism. Residues His382 and Lys510 contribute to the active site.

The protein belongs to the GPI family.

The protein localises to the cytoplasm. The enzyme catalyses alpha-D-glucose 6-phosphate = beta-D-fructose 6-phosphate. Its pathway is carbohydrate biosynthesis; gluconeogenesis. It functions in the pathway carbohydrate degradation; glycolysis; D-glyceraldehyde 3-phosphate and glycerone phosphate from D-glucose: step 2/4. Functionally, catalyzes the reversible isomerization of glucose-6-phosphate to fructose-6-phosphate. The sequence is that of Glucose-6-phosphate isomerase from Helicobacter pylori (strain G27).